Consider the following 1107-residue polypeptide: MSQAQDYECRSHHVDEQEPRIPGSSTRLEWVEIIEPRTRERMYANLVTGECVWDPPAGVRIKRTSEDQWWELFDPNTSRFYYYSAASQRTVWHRPQNCDIIPLAKLQTLKQNTESPRASADNSPGRGSRDGSTGSSLEPELEERTQELPVRSGRATTLVTSKEDTSSCSPPGVLLEKDYEVYRDYSADGQLLHYRTSSLRWNSGNKERMLIKVADREPSFLTPQGNGYPADNQPGGHHRRPSGSQHSPNLQTFVPDTDGTVFFPERRPSPFLRRAELSGNCSPLLIQPRKPSSDSQPSSPRYGYEPPLYEEPPVEYQAPIYDEPPMDVQFEANSPYQTGSPQRSPGRKPHPFLQTTKQTPTSPCQQLMRTKQKCPERFLSLEYSPVGKEYVRQLVYVEQAGSSPKLRAGPRHKYAPNPGGGTYSLQPSPCLLRDQRLGVRSGDYSTMEGPESRPSQPPTPLPQAQEDAMSWSSQQDTMSSTGYSPGTRKRKNRKPSLCQVPSTSSTDGAGGLLGEQPLTEERSPCRASLTPVKAEADLVRGTPEPFLAQARLAWEAQQAHFHMKQRGSWDSQQDGSGYESDGAVPLPMPGPVVRAFSEDEALAQQDSKHWKRSTFDKLGFPQILLEKSVSVQTNLASPEPHLHPSQSEDLGACAQFESSRQNRSAMPSSSCVFPTFTLRKPSSETDIENWASKHFNKHTQGLFRRKVSIANMLAWSSESIKKPMIVTSDRHVKKEACEIFKLIQMYMGDRRAKADPLHVALEIATKGWSAQGLRDELYIQLCRQTTENFRLESLARGWELMAICLAFFPPTPKFHSYLEGYIYRHMDPVNDTKVTQHIKELLERNSKKKSKLRKKPKPYVEEPDGVAISTYAKYCYHKLQKAALTGAKKGLKKPNVEEIRHAKNAVFSPSMFGSALQEVMSMQKERYPDRQLPWVQTRLSEEVLALNGDQTEGIFRVPGDIDEVNALKLQVDQWKVPTGLEDPHVPASLLKLWYRELEEPLIPHEFYEQCIAHYESPEAAVAVVHALPRINRMVLCYLIRFLQVFVQPANVAITKMDVSNLAMVMAPNCLRCQSDDPRVIFENTRKEMSFLRVLIQHLDTSFMEGVL.

The tract at residues methionine 1–isoleucine 21 is disordered. Serine 2 is modified (N-acetylserine). Residues tyrosine 7–proline 19 are compositionally biased toward basic and acidic residues. WW domains are found at residues serine 25–glycine 58 and arginine 63–asparagine 97. Residues glutamine 111–asparagine 122 are compositionally biased toward polar residues. Disordered stretches follow at residues glutamine 111–valine 173, proline 218–arginine 267, serine 282–glutamate 311, and methionine 326–threonine 370. Low complexity predominate over residues serine 123–serine 136. Over residues serine 242–valine 254 the composition is skewed to polar residues. Serine 282 is subject to Phosphoserine. Composition is skewed to polar residues over residues glutamate 331–arginine 343 and leucine 353–arginine 369. 4 positions are modified to phosphoserine: serine 380, serine 384, serine 402, and serine 403. 3 disordered regions span residues proline 404–proline 429, serine 441–leucine 529, and methionine 563–proline 585. Over residues serine 470–serine 484 the composition is skewed to polar residues. Residues serine 597, serine 683, serine 708, and serine 719 each carry the phosphoserine modification. Residues tryptophan 715–alanine 867 enclose the MyTH4 domain. The Rho-GAP domain occupies serine 914–phenylalanine 1102.

It localises to the nucleus. This chain is Rho GTPase-activating protein 39 (Arhgap39), found in Mus musculus (Mouse).